Here is a 601-residue protein sequence, read N- to C-terminus: DNA mismatch repair protein MutL (601 aa).

This sequence belongs to the DNA mismatch repair MutL/HexB family.

Functionally, this protein is involved in the repair of mismatches in DNA. It is required for dam-dependent methyl-directed DNA mismatch repair. May act as a 'molecular matchmaker', a protein that promotes the formation of a stable complex between two or more DNA-binding proteins in an ATP-dependent manner without itself being part of a final effector complex. The chain is DNA mismatch repair protein MutL from Listeria monocytogenes serovar 1/2a (strain ATCC BAA-679 / EGD-e).